A 340-amino-acid chain; its full sequence is Coproporphyrin III ferrochelatase (340 aa).

Fe-coproporphyrin III is bound by residues serine 52 and tyrosine 121. The Fe(2+) site is built by histidine 181 and glutamate 264.

Belongs to the ferrochelatase family.

It localises to the cytoplasm. The enzyme catalyses Fe-coproporphyrin III + 2 H(+) = coproporphyrin III + Fe(2+). It participates in porphyrin-containing compound metabolism; protoheme biosynthesis. Its function is as follows. Involved in coproporphyrin-dependent heme b biosynthesis. Catalyzes the insertion of ferrous iron into coproporphyrin III to form Fe-coproporphyrin III. This chain is Coproporphyrin III ferrochelatase, found in Mycolicibacterium smegmatis (strain ATCC 700084 / mc(2)155) (Mycobacterium smegmatis).